Consider the following 411-residue polypeptide: Serine hydroxymethyltransferase (411 aa).

Residues Leu-119 and 123-125 (GHL) each bind (6S)-5,6,7,8-tetrahydrofolate. N6-(pyridoxal phosphate)lysine is present on Lys-228. 351 to 353 (SPF) lines the (6S)-5,6,7,8-tetrahydrofolate pocket.

It belongs to the SHMT family. Homodimer. Requires pyridoxal 5'-phosphate as cofactor.

Its subcellular location is the cytoplasm. It catalyses the reaction (6R)-5,10-methylene-5,6,7,8-tetrahydrofolate + glycine + H2O = (6S)-5,6,7,8-tetrahydrofolate + L-serine. It participates in one-carbon metabolism; tetrahydrofolate interconversion. Its pathway is amino-acid biosynthesis; glycine biosynthesis; glycine from L-serine: step 1/1. Its function is as follows. Catalyzes the reversible interconversion of serine and glycine with tetrahydrofolate (THF) serving as the one-carbon carrier. This reaction serves as the major source of one-carbon groups required for the biosynthesis of purines, thymidylate, methionine, and other important biomolecules. Also exhibits THF-independent aldolase activity toward beta-hydroxyamino acids, producing glycine and aldehydes, via a retro-aldol mechanism. The polypeptide is Serine hydroxymethyltransferase (Clostridium botulinum (strain Eklund 17B / Type B)).